The sequence spans 370 residues: Pituitary-specific positive transcription factor 1 (370 aa).

The 9aaTAD signature appears at A5–V13. The POU-specific domain maps to M202–E276. Residues K292–K351 constitute a DNA-binding region (homeobox).

It belongs to the POU transcription factor family. Class-1 subfamily. In terms of tissue distribution, pituitary gland.

It localises to the nucleus. Transcription factor that activates growth hormone and prolactin genes. Specifically binds to the consensus sequence 5'-TAAAT-3'. In Meleagris gallopavo (Wild turkey), this protein is Pituitary-specific positive transcription factor 1 (POU1F1).